A 252-amino-acid chain; its full sequence is Ubiquinone biosynthesis protein COQ4 homolog 1, mitochondrial (252 aa).

Histidine 130, aspartate 131, histidine 134, and glutamate 146 together coordinate Zn(2+).

Belongs to the COQ4 family. Component of a multi-subunit COQ enzyme complex. Zn(2+) is required as a cofactor.

It is found in the mitochondrion inner membrane. It catalyses the reaction a 4-hydroxy-3-methoxy-5-(all-trans-polyprenyl)benzoate + H(+) = a 2-methoxy-6-(all-trans-polyprenyl)phenol + CO2. Its pathway is cofactor biosynthesis; ubiquinone biosynthesis. Lyase that catalyzes the C1-decarboxylation of 4-hydroxy-3-methoxy-5-(all-trans-polyprenyl)benzoic acid into 2-methoxy-6-(all-trans-polyprenyl)phenol during ubiquinone biosynthesis. This is Ubiquinone biosynthesis protein COQ4 homolog 1, mitochondrial from Trypanosoma cruzi (strain CL Brener).